The sequence spans 299 residues: Large ribosomal subunit protein eL22 (299 aa).

Disordered stretches follow at residues 1–142 (MAPT…AAPA) and 155–178 (VAKPAPKPKAKAAPAPSKVVKKNV). Composition is skewed to basic and acidic residues over residues 33–42 (GKVEKPKAEA) and 55–64 (KASEAAKDVK). Composition is skewed to low complexity over residues 65–98 (AAAAAAKPAAAKPAAAKPAAASKDAGKKAPAAAA) and 105–142 (AAAAPAPAKAAPAKKAASTPAAAPPAKKAAPAKAAAPA).

The protein belongs to the eukaryotic ribosomal protein eL22 family.

The protein is Large ribosomal subunit protein eL22 (RpL22) of Drosophila melanogaster (Fruit fly).